The sequence spans 766 residues: MTSASAPPDLKAHGLSPEEYRQIQQQLGRDPNPTELAMFGVMWSEHCCYKNSRPLLKHFPTTGERVVVGPGENAGVVDLGDGDWLAFKIESHNHPSAVEPFQGAATGVGGILRDIFTLGARPIALLNSLRFGPLTDPRNRRLMARVVEGIAHYGNCVGVPTVGGEVAVDPCYSGNPLVNVMALGLLETPAVVKSAARGVGNPILYVGATTGRDGIRGASFASAELKEDAQQDRPAVQVGDPFLGKCLIEACLEAFATVAVVAAQDMGAAGITCSTAEMAAKGGVGIRFDLDRVPARESGMAAWEYLLSESQERMLLVVQKGREAEVMEIFHRWGLQASVAGEVIAEPLVEIWHQGSCVVRVPARALAEDTPVYVRPLLPEPPEYVQAAWQWDPSTLPPCDRQGIHLPQKTLAWEQVLLQLLASPTLASKAWIYRQYDHQVQNNTVLWPGQGDAAVIRIRSQKFGVGEVPPLQAARKAIAATLDGNGRWVYLDPYEGAKAAVAEAARNLSCVGADPLAITDNLNFGSPENPVVYWQLALACRGIAEACRALGTPVTGGNVSLYNEKGSQAIYPTPVIGMVGLIPDLKFICGQGWQQEGDLVYLLGSQAVTSLGGSEYLAAIYNKVTGRPAPVDLELEKRVQGACRHGIRQGWVRSAHDCSEGGLAVALAEACLSGGRGASVSLAPGSLPWDQALFGEGSSRILVSVDPAQRSPWEAYLESQLPGQWQLLGQVGGPADPLVLTTAEGDPLLSVSLAALQGAYYSAFAD.

Residue His-46 is part of the active site. 2 residues coordinate ATP: Tyr-49 and Lys-88. Glu-90 is a Mg(2+) binding site. Residues 91-94 (SHNH) and Arg-113 contribute to the substrate site. Catalysis depends on His-92, which acts as the Proton acceptor. Residue Asp-114 participates in Mg(2+) binding. Residue Gln-237 coordinates substrate. Asp-265 lines the Mg(2+) pocket. Position 309-311 (309-311 (ESQ)) interacts with substrate. ATP is bound by residues Asp-520 and Gly-557. Asn-558 lines the Mg(2+) pocket. A substrate-binding site is contributed by Ser-560.

Belongs to the FGAMS family. In terms of assembly, monomer. Part of the FGAM synthase complex composed of 1 PurL, 1 PurQ and 2 PurS subunits.

It localises to the cytoplasm. The catalysed reaction is N(2)-formyl-N(1)-(5-phospho-beta-D-ribosyl)glycinamide + L-glutamine + ATP + H2O = 2-formamido-N(1)-(5-O-phospho-beta-D-ribosyl)acetamidine + L-glutamate + ADP + phosphate + H(+). Its pathway is purine metabolism; IMP biosynthesis via de novo pathway; 5-amino-1-(5-phospho-D-ribosyl)imidazole from N(2)-formyl-N(1)-(5-phospho-D-ribosyl)glycinamide: step 1/2. Its function is as follows. Part of the phosphoribosylformylglycinamidine synthase complex involved in the purines biosynthetic pathway. Catalyzes the ATP-dependent conversion of formylglycinamide ribonucleotide (FGAR) and glutamine to yield formylglycinamidine ribonucleotide (FGAM) and glutamate. The FGAM synthase complex is composed of three subunits. PurQ produces an ammonia molecule by converting glutamine to glutamate. PurL transfers the ammonia molecule to FGAR to form FGAM in an ATP-dependent manner. PurS interacts with PurQ and PurL and is thought to assist in the transfer of the ammonia molecule from PurQ to PurL. The polypeptide is Phosphoribosylformylglycinamidine synthase subunit PurL (Synechococcus sp. (strain JA-3-3Ab) (Cyanobacteria bacterium Yellowstone A-Prime)).